The primary structure comprises 128 residues: Hemoglobin subunit beta-1 (128 aa).

The region spanning 2–128 (HWTAEEKALV…VVDALSKGYH (127 aa)) is the Globin domain. Positions 51 and 74 each coordinate heme b.

This sequence belongs to the globin family. In terms of assembly, hb 1 is a heterotetramer of two alpha and two beta-1 chains. Red blood cells (at protein level).

Functionally, involved in oxygen transport from gills to the various peripheral tissues. This chain is Hemoglobin subunit beta-1, found in Somniosus microcephalus (Greenland sleeper shark).